Consider the following 382-residue polypeptide: Kelch domain-containing protein 3 (382 aa).

5 Kelch repeats span residues 25–77 (RVYS…PYMR), 88–138 (TVFL…VLGK), 139–189 (IMYI…TMLG), 191–249 (HMYV…GYNG), and 251–301 (LYIF…IVGD).

As to quaternary structure, component of a CRL2(KLHDC3) complex, also named ECS(KLHDC3) complex, composed of CUL2, Elongin BC (ELOB and ELOC), RBX1 and substrate-specific adapter KLHDC3. May form oligomers as a KLHDC3-ELOB-ELOC complex; this interaction is likely autoinhibitory for the E3 ligase complex.

Its subcellular location is the cytoplasm. Its pathway is protein modification; protein ubiquitination. In terms of biological role, substrate-recognition component of a Cul2-RING (CRL2) E3 ubiquitin-protein ligase complex of the DesCEND (destruction via C-end degrons) pathway, which recognizes a C-degron located at the extreme C terminus of target proteins, leading to their ubiquitination and degradation. The C-degron recognized by the DesCEND pathway is usually a motif of less than ten residues and can be present in full-length proteins, truncated proteins or proteolytically cleaved forms. The CRL2(KLHDC3) complex specifically recognizes proteins with a glycine (Gly) at the C-terminus, leading to their ubiquitination and degradation: recognizes the C-terminal -Arg-(Xaa)n-Arg-Gly, -Arg-(Xaa)n-Lys-Gly, and -Arg-(Xaa)n-Gln-Gly degrons. The CRL2(KLHDC3) complex mediates ubiquitination and degradation of truncated SELENOV and SEPHS2 selenoproteins produced by failed UGA/Sec decoding, which end with a glycine. May be involved in meiotic recombination process. The sequence is that of Kelch domain-containing protein 3 from Rattus norvegicus (Rat).